Reading from the N-terminus, the 223-residue chain is N-(5'-phosphoribosyl)anthranilate isomerase (223 aa).

The protein belongs to the TrpF family.

It catalyses the reaction N-(5-phospho-beta-D-ribosyl)anthranilate = 1-(2-carboxyphenylamino)-1-deoxy-D-ribulose 5-phosphate. The protein operates within amino-acid biosynthesis; L-tryptophan biosynthesis; L-tryptophan from chorismate: step 3/5. This is N-(5'-phosphoribosyl)anthranilate isomerase from Bradyrhizobium diazoefficiens (strain JCM 10833 / BCRC 13528 / IAM 13628 / NBRC 14792 / USDA 110).